The primary structure comprises 224 residues: 4'-phosphopantetheinyl transferase (224 aa).

Mg(2+) is bound by residues Asp-107, Glu-109, and Glu-151. The peptidyl carrier protein binding stretch occupies residues 158 to 189 (GKGLSLPLDSFSVRLKDDGHVSIELPDGHEPC).

It belongs to the P-Pant transferase superfamily. Gsp/Sfp/HetI/AcpT family. The cofactor is Mg(2+).

It carries out the reaction apo-[peptidyl-carrier protein] + CoA = holo-[peptidyl-carrier protein] + adenosine 3',5'-bisphosphate + H(+). May activate the peptidyl carrier protein (PCP) domains of surfactin synthetase SRF1/2/3 and iturin A synthetase, by transferring the 4'-phosphopantetheinyl moiety of coenzyme A (CoA) to a serine residue. Required for the coproduction of the lipopeptide antibiotics, iturin A and surfactin. The sequence is that of 4'-phosphopantetheinyl transferase (lpa-14) from Bacillus subtilis.